The primary structure comprises 296 residues: tRNA dimethylallyltransferase (296 aa).

Position 11–18 (11–18 (GPTAVGKT)) interacts with ATP. 13–18 (TAVGKT) contributes to the substrate binding site. The interval 36–39 (DSQQ) is interaction with substrate tRNA.

The protein belongs to the IPP transferase family. As to quaternary structure, monomer. Mg(2+) serves as cofactor.

It carries out the reaction adenosine(37) in tRNA + dimethylallyl diphosphate = N(6)-dimethylallyladenosine(37) in tRNA + diphosphate. Catalyzes the transfer of a dimethylallyl group onto the adenine at position 37 in tRNAs that read codons beginning with uridine, leading to the formation of N6-(dimethylallyl)adenosine (i(6)A). This Streptococcus equi subsp. zooepidemicus (strain H70) protein is tRNA dimethylallyltransferase.